Here is a 389-residue protein sequence, read N- to C-terminus: viridiflorene synthase Agr2 (389 aa).

An N-terminal signal peptide occupies residues 1-15 (MVWDFVLSLFHSLLA). Residues aspartate 128, asparagine 263, serine 267, and glutamate 271 each coordinate Mg(2+). The DDXXD motif signature appears at 128–132 (DEVTD). (2E,6E)-farnesyl diphosphate contacts are provided by arginine 360 and tyrosine 361.

This sequence belongs to the terpene synthase family. The cofactor is Mg(2+).

It catalyses the reaction (2E,6E)-farnesyl diphosphate = viridiflorene + diphosphate. In terms of biological role, terpene cyclase that catalyzes the cyclization of farnesyl diphosphate (FPP) to viridiflorene. In Cyclocybe aegerita (Black poplar mushroom), this protein is viridiflorene synthase Agr2.